The primary structure comprises 121 residues: uncharacterized protein (121 aa).

This is an uncharacterized protein from Microplitis demolitor (Parasitoid wasp).